Consider the following 255-residue polypeptide: Wtf element wtf15 (255 aa).

Positions K19–S78 are disordered. Polar residues-rich tracts occupy residues T41–E60 and E67–S78. Transmembrane regions (helical) follow at residues F85–P105, F112–I132, F162–L182, and W187–L208.

Belongs to the WTF family.

The protein resides in the spore membrane. Functionally, may act in meiotic drive. In Schizosaccharomyces pombe (strain 972 / ATCC 24843) (Fission yeast), this protein is Wtf element wtf15.